Here is a 56-residue protein sequence, read N- to C-terminus: Large ribosomal subunit protein bL33 (56 aa).

The protein belongs to the bacterial ribosomal protein bL33 family.

The polypeptide is Large ribosomal subunit protein bL33 (Halorhodospira halophila (strain DSM 244 / SL1) (Ectothiorhodospira halophila (strain DSM 244 / SL1))).